An 874-amino-acid chain; its full sequence is Translation initiation factor IF-2 (874 aa).

Residues 1–262 (MEDKNKTIKE…EKSTSDRDFS (262 aa)) form a disordered region. The segment covering 54–63 (SKPPVMPLPL) has biased composition (pro residues). The span at 83–104 (AKREESPGKQDAGRPPRDKDTR) shows a compositional bias: basic and acidic residues. Residues 141-222 (SGGGYQGNRG…NRGPRSGGTG (82 aa)) are compositionally biased toward gly residues. The span at 235–244 (LSQSRGSSVT) shows a compositional bias: polar residues. Residues 250–262 (HDKEKSTSDRDFS) are compositionally biased toward basic and acidic residues. The 170-residue stretch at 369–538 (NRPPVVTIMG…LLQAEVMDLK (170 aa)) folds into the tr-type G domain. The tract at residues 378-385 (GHVDHGKT) is G1. Residue 378–385 (GHVDHGKT) coordinates GTP. The G2 stretch occupies residues 403–407 (GITQH). The segment at 424–427 (DTPG) is G3. GTP contacts are provided by residues 424 to 428 (DTPGH) and 478 to 481 (NKID). The G4 stretch occupies residues 478–481 (NKID). The G5 stretch occupies residues 514 to 516 (SAR).

Belongs to the TRAFAC class translation factor GTPase superfamily. Classic translation factor GTPase family. IF-2 subfamily.

Its subcellular location is the cytoplasm. In terms of biological role, one of the essential components for the initiation of protein synthesis. Protects formylmethionyl-tRNA from spontaneous hydrolysis and promotes its binding to the 30S ribosomal subunits. Also involved in the hydrolysis of GTP during the formation of the 70S ribosomal complex. This is Translation initiation factor IF-2 from Leptospira interrogans serogroup Icterohaemorrhagiae serovar copenhageni (strain Fiocruz L1-130).